We begin with the raw amino-acid sequence, 903 residues long: Protein translocase subunit SecA (903 aa).

Residues Gln-85, 103–107, and Asp-492 each bind ATP; that span reads GEGKT. The interval 863-890 is disordered; it reads GDGVKQPVRRDKKVGRNSPCPCGSGKKY. Residues Cys-882, Cys-884, Cys-893, and Cys-894 each coordinate Zn(2+).

It belongs to the SecA family. Monomer and homodimer. Part of the essential Sec protein translocation apparatus which comprises SecA, SecYEG and auxiliary proteins SecDF. Other proteins may also be involved. It depends on Zn(2+) as a cofactor.

The protein resides in the cell membrane. It localises to the cytoplasm. The catalysed reaction is ATP + H2O + cellular proteinSide 1 = ADP + phosphate + cellular proteinSide 2.. Part of the Sec protein translocase complex. Interacts with the SecYEG preprotein conducting channel. Has a central role in coupling the hydrolysis of ATP to the transfer of proteins into and across the cell membrane, serving as an ATP-driven molecular motor driving the stepwise translocation of polypeptide chains across the membrane. This is Protein translocase subunit SecA from Desulforudis audaxviator (strain MP104C).